The following is a 319-amino-acid chain: MLIKPQSTSSFPLNWDAIFPEKNPLAVEIGFGNGKFLKTLETTGTNVVGFEVSLLSVEKAMKVIDHTKTALLLMDGIWGLRELFSERSVDALYINFPLPWPHKKHASRRLFTLPKLQIYASRLVDNAILQLQTDVKEYAEEAIRNSEESGLFSLADYAVRNEVQVGTKYEQKWVSQGKKIYKVVLRKKRHVSVPNYLDKEVIMPHAIVHDSHGTLKAGTYRTTFGTIKLWEPFSNNQAMLLIPAIVSDDDFIGVSLQQRVYISVSPHREGFIVKLDNHADVFKTENVKSLIWLIANQISNGNIKRINVQPPSKLEYEPA.

Positions 28, 51, and 75 each coordinate S-adenosyl-L-methionine. Substrate-binding positions include D134 and 167-170; that span reads TKYE.

Belongs to the class I-like SAM-binding methyltransferase superfamily. TrmB family.

It catalyses the reaction guanosine(46) in tRNA + S-adenosyl-L-methionine = N(7)-methylguanosine(46) in tRNA + S-adenosyl-L-homocysteine. Its pathway is tRNA modification; N(7)-methylguanine-tRNA biosynthesis. Catalyzes the formation of N(7)-methylguanine at position 46 (m7G46) in tRNA. The sequence is that of tRNA (guanine-N(7)-)-methyltransferase from Coprothermobacter proteolyticus (strain ATCC 35245 / DSM 5265 / OCM 4 / BT).